The sequence spans 208 residues: ATP phosphoribosyltransferase (208 aa).

This sequence belongs to the ATP phosphoribosyltransferase family. Short subfamily. As to quaternary structure, heteromultimer composed of HisG and HisZ subunits.

It is found in the cytoplasm. It catalyses the reaction 1-(5-phospho-beta-D-ribosyl)-ATP + diphosphate = 5-phospho-alpha-D-ribose 1-diphosphate + ATP. It participates in amino-acid biosynthesis; L-histidine biosynthesis; L-histidine from 5-phospho-alpha-D-ribose 1-diphosphate: step 1/9. Catalyzes the condensation of ATP and 5-phosphoribose 1-diphosphate to form N'-(5'-phosphoribosyl)-ATP (PR-ATP). Has a crucial role in the pathway because the rate of histidine biosynthesis seems to be controlled primarily by regulation of HisG enzymatic activity. The polypeptide is ATP phosphoribosyltransferase (Thermotoga neapolitana (strain ATCC 49049 / DSM 4359 / NBRC 107923 / NS-E)).